The sequence spans 487 residues: Putative beta-glucosidase 35 (487 aa).

The N-terminal stretch at 1-27 (MGIRMGRRLLLITLLLGALLCNNVAYA) is a signal peptide. Q48 serves as a coordination point for a beta-D-glucoside. Residues N76 and N116 are each glycosylated (N-linked (GlcNAc...) asparagine). Residues H151 and 200–201 (NE) contribute to the a beta-D-glucoside site. The Proton donor role is filled by E201. C220 and C228 are oxidised to a cystine. Y344 lines the a beta-D-glucoside pocket. A glycan (N-linked (GlcNAc...) asparagine) is linked at N369. E414 contributes to the a beta-D-glucoside binding site. E414 (nucleophile) is an active-site residue. 2 N-linked (GlcNAc...) asparagine glycosylation sites follow: N418 and N419. F458 is a binding site for a beta-D-glucoside.

Belongs to the glycosyl hydrolase 1 family.

The catalysed reaction is Hydrolysis of terminal, non-reducing beta-D-glucosyl residues with release of beta-D-glucose.. The protein is Putative beta-glucosidase 35 (BGLU35) of Oryza sativa subsp. japonica (Rice).